The primary structure comprises 261 residues: MSIHASAIVHPSAQLAEGVEVGPYAIIEEHAIIGKGTSIGAHAVIGKWTELGENNQIYHMASVGAAPQDLKYKGEECWTRLGNGNVIREFATIHRGTVTGHAETVMGNNNLMMAYSHVAHDCTVGNGVVMANAATLAGHVTVQDNVILGGLVAIHQFVTIGAYAMLGGGTLVGMDIPPYMIATSGGKREAQLRGLNLIGLKRRGFSDEAISGLKKAYKTLFMAHLKQADAIAKIRSEIVGCAEVDTLLAFIEASQRGICRG.

It belongs to the transferase hexapeptide repeat family. LpxA subfamily. In terms of assembly, homotrimer.

The protein localises to the cytoplasm. The catalysed reaction is a (3R)-hydroxyacyl-[ACP] + UDP-N-acetyl-alpha-D-glucosamine = a UDP-3-O-[(3R)-3-hydroxyacyl]-N-acetyl-alpha-D-glucosamine + holo-[ACP]. The protein operates within glycolipid biosynthesis; lipid IV(A) biosynthesis; lipid IV(A) from (3R)-3-hydroxytetradecanoyl-[acyl-carrier-protein] and UDP-N-acetyl-alpha-D-glucosamine: step 1/6. Its function is as follows. Involved in the biosynthesis of lipid A, a phosphorylated glycolipid that anchors the lipopolysaccharide to the outer membrane of the cell. This chain is Acyl-[acyl-carrier-protein]--UDP-N-acetylglucosamine O-acyltransferase, found in Trichlorobacter lovleyi (strain ATCC BAA-1151 / DSM 17278 / SZ) (Geobacter lovleyi).